A 526-amino-acid chain; its full sequence is Dual specificity tyrosine-phosphorylation-regulated kinase 2 (526 aa).

Composition is skewed to polar residues over residues 30–40 (TTQPNGLTTLG) and 60–70 (GSSSSLKSTDG). The segment at 30 to 76 (TTQPNGLTTLGKSGLPVVQDRQSESAHRRQGSSSSLKSTDGTGKVKA) is disordered. Thr31 is modified (phosphothreonine; by ATM). A Nuclear localization signal motif is present at residues 114–116 (KKR). A Protein kinase domain is found at 147 to 460 (YEVLKVIGKG…PSQALRHPWL (314 aa)). Residues 153–161 (IGKGSFGQV), Lys176, and 226–229 (FELL) each bind ATP. Asp273 (proton acceptor) is an active-site residue. Tyr307 is subject to Phosphotyrosine. Ser367 carries the phosphoserine; by ATM modification. A disordered region spans residues 462-499 (RRLPKPPTGEKASAKRITESTGAITSISKLPPTSSSAS). The span at 480 to 499 (ESTGAITSISKLPPTSSSAS) shows a compositional bias: polar residues.

It belongs to the protein kinase superfamily. CMGC Ser/Thr protein kinase family. MNB/DYRK subfamily. In terms of assembly, interacts with MDM2. The cofactor is Mg(2+). Requires Mn(2+) as cofactor. In terms of processing, phosphorylated on serine/threonine residues. Phosphorylation on Thr-31 and Ser-367 by ATM in response to genotoxic stress disrupts MDM2 binding and prevents MDM2-mediated ubiquitination and subsequent proteasome degradation, thus promoting p53/TP53-mediated apoptosis. Post-translationally, ubiquitination in nucleus by MDM2 in normal conditions leads to proteasome degradation.

It localises to the cytoplasm. The protein resides in the nucleus. The enzyme catalyses L-seryl-[protein] + ATP = O-phospho-L-seryl-[protein] + ADP + H(+). It carries out the reaction L-threonyl-[protein] + ATP = O-phospho-L-threonyl-[protein] + ADP + H(+). It catalyses the reaction L-tyrosyl-[protein] + ATP = O-phospho-L-tyrosyl-[protein] + ADP + H(+). With respect to regulation, autophosphorylates on tyrosine residues. Its function is as follows. Serine/threonine-protein kinase involved in the control of mitotic transition and the regulation of cellular growth and/or development. The polypeptide is Dual specificity tyrosine-phosphorylation-regulated kinase 2 (Gallus gallus (Chicken)).